We begin with the raw amino-acid sequence, 1127 residues long: E3 ubiquitin-protein ligase TRIM33 (1127 aa).

Residues 1 to 18 are compositionally biased toward gly residues; it reads MAENKGGGEAESGGGGSG. Residues 1–118 are disordered; it reads MAENKGGGEA…PSAGPPPGPP (118 aa). Positions 1–147 are necessary for E3 ubiquitin-protein ligase activity and repression of SMAD4 signaling and transcriptional repression; the sequence is MAENKGGGEA…AEPKLLPCLH (147 aa). The span at 19–37 shows a compositional bias: low complexity; the sequence is SAPVTAGAAGPAAQEAEPP. The span at 52-64 shows a compositional bias: gly residues; sequence RAGAEGGAAGPDD. Low complexity predominate over residues 65–97; that stretch reads GGVAAASSGSAQAASSPAASVGTGVAGGAVSTP. The segment covering 98 to 118 has biased composition (pro residues); that stretch reads APAPASAPAPGPSAGPPPGPP. The RING-type zinc finger occupies 125–154; sequence CAVCQQSLQSRREAEPKLLPCLHSFCLRCL. 2 consecutive B box-type zinc fingers follow at residues 212-259 and 271-312; these read KSEQ…IRKK and QRPV…YQFL. The Zn(2+) site is built by Cys217, Cys220, Cys241, His245, Cys276, His279, Cys299, and His304. The segment at 299-401 is necessary for oligomerization; sequence CQLLEHKEHR…QMKLLQQQND (103 aa). The stretch at 299–401 forms a coiled coil; the sequence is CQLLEHKEHR…QMKLLQQQND (103 aa). Residues Lys329, Lys334, Lys481, and Lys504 each participate in a glycyl lysine isopeptide (Lys-Gly) (interchain with G-Cter in SUMO2) cross-link. At Arg515 the chain carries Asymmetric dimethylarginine; alternate. Arg515 bears the Omega-N-methylarginine; alternate mark. Lys527 is covalently cross-linked (Glycyl lysine isopeptide (Lys-Gly) (interchain with G-Cter in SUMO2)). Arg535 carries the post-translational modification Omega-N-methylarginine. The tract at residues 536 to 563 is disordered; the sequence is MQQPPAPVPTTTTTTQQHPRQAAPQMLQ. Asymmetric dimethylarginine is present on Arg577. Arg591 is subject to Asymmetric dimethylarginine; alternate. An Omega-N-methylarginine; alternate modification is found at Arg591. Asymmetric dimethylarginine is present on residues Arg598 and Arg604. Disordered stretches follow at residues 608 to 629, 673 to 692, and 703 to 818; these read PQYSMMQPHLQRQHSNPGHAGP, NPENLPSLPDIPPIQLEDAG, and YISG…TPPL. The span at 723–759 shows a compositional bias: low complexity; that stretch reads PSALSPGSSGLSNSHTPVRPPSTSSTGSRGSCGSSGR. Lys763 and Lys769 each carry N6-acetyllysine; alternate. Glycyl lysine isopeptide (Lys-Gly) (interchain with G-Cter in SUMO2); alternate cross-links involve residues Lys763 and Lys769. A Glycyl lysine isopeptide (Lys-Gly) (interchain with G-Cter in SUMO2) cross-link involves residue Lys774. Residues Lys776 and Lys793 each participate in a glycyl lysine isopeptide (Lys-Gly) (interchain with G-Cter in SUMO2); alternate cross-link. Residues Lys776 and Lys793 each participate in a glycyl lysine isopeptide (Lys-Gly) (interchain with G-Cter in SUMO1); alternate cross-link. Residue Lys793 is modified to N6-acetyllysine; alternate. Basic and acidic residues predominate over residues 793–802; sequence KQEKTEDGRR. Lys796 participates in a covalent cross-link: Glycyl lysine isopeptide (Lys-Gly) (interchain with G-Cter in SUMO2). Ser803 is subject to Phosphoserine. Positions 807 to 818 are enriched in low complexity; the sequence is LSSPESSLTPPL. The residue at position 815 (Thr815) is a Phosphothreonine. A Glycyl lysine isopeptide (Lys-Gly) (interchain with G-Cter in SUMO2) cross-link involves residue Lys861. A Phosphoserine modification is found at Ser862. A PHD-type zinc finger spans residues 887–934; it reads EDWCAVCQNGGDLLCCEKCPKVFHLTCHVPTLLSFPSGDWICTFCRDI. At Lys951 the chain carries N6-acetyllysine. Residue Lys953 is modified to N6-acetyllysine; alternate. A Glycyl lysine isopeptide (Lys-Gly) (interchain with G-Cter in SUMO2); alternate cross-link involves residue Lys953. A Bromo domain is found at 957 to 1080; the sequence is GLSPVDQRKC…LYFEDKLTEI (124 aa). Glycyl lysine isopeptide (Lys-Gly) (interchain with G-Cter in SUMO2) cross-links involve residues Lys1007 and Lys1043. At Thr1051 the chain carries Phosphothreonine. Residue Lys1057 forms a Glycyl lysine isopeptide (Lys-Gly) (interchain with G-Cter in SUMO2) linkage. A disordered region spans residues 1088–1127; sequence PLPEFEQEEDDGEVTEDSDEDFIQPRRKRLKSDERPVHIK. The segment covering 1092 to 1109 has biased composition (acidic residues); it reads FEQEEDDGEVTEDSDEDF. Phosphothreonine is present on Thr1102. At Ser1105 the chain carries Phosphoserine. A Glycyl lysine isopeptide (Lys-Gly) (interchain with G-Cter in SUMO2) cross-link involves residue Lys1118. The segment covering 1118–1127 has biased composition (basic and acidic residues); that stretch reads KSDERPVHIK. Ser1119 bears the Phosphoserine mark.

This sequence belongs to the TRIM/RBCC family. Homooligomer and heterooligomer with TRIM24 and TRIM28 family members. Interacts with SMAD4 in unstimulated cells. Found in a complex with SMAD2 and SMAD3 upon addition of TGF-beta. Interacts with SMAD2 and SMAD3. Interacts with SMAD4 under basal and induced conditions and, upon TGF-beta signaling, with activated SMAD2. Forms a ternary complex with SMAD4 and SMAD2 upon TGF-beta signaling. Post-translationally, sumoylated with SUMO1. As to expression, expressed in stem cells at the bottom of the crypts of the colon (at protein level). Expressed in colon adenomas and adenocarcinomas (at protein level). Expressed in brain, lung, liver, spleen, thymus, prostate, kidney, testis, heart, placenta, pancreas, small intestine, ovary, colon, skeletal muscle and hematopoietic progenitors.

It localises to the nucleus. It catalyses the reaction S-ubiquitinyl-[E2 ubiquitin-conjugating enzyme]-L-cysteine + [acceptor protein]-L-lysine = [E2 ubiquitin-conjugating enzyme]-L-cysteine + N(6)-ubiquitinyl-[acceptor protein]-L-lysine.. It participates in protein modification; protein ubiquitination. Functionally, acts as an E3 ubiquitin-protein ligase. Promotes SMAD4 ubiquitination, nuclear exclusion and degradation via the ubiquitin proteasome pathway. According to PubMed:16751102, does not promote a decrease in the level of endogenous SMAD4. May act as a transcriptional repressor. Inhibits the transcriptional response to TGF-beta/BMP signaling cascade. Plays a role in the control of cell proliferation. Its association with SMAD2 and SMAD3 stimulates erythroid differentiation of hematopoietic stem/progenitor. Monoubiquitinates SMAD4 and acts as an inhibitor of SMAD4-dependent TGF-beta/BMP signaling cascade (Monoubiquitination of SMAD4 hampers its ability to form a stable complex with activated SMAD2/3 resulting in inhibition of TGF-beta/BMP signaling cascade). The sequence is that of E3 ubiquitin-protein ligase TRIM33 (TRIM33) from Homo sapiens (Human).